The following is a 124-amino-acid chain: Putative calmodulin-3 (124 aa).

4 EF-hand domains span residues 1–18 (GCIT…LGQN), 19–54 (PTEA…KIKD), 56–91 (DFEE…LGEK), and 92–124 (LTDE…MMAK). C2, E7, D32, D34, N36, T38, E43, D69, D71, N73, and E80 together coordinate Ca(2+). K91 is subject to N6,N6,N6-trimethyllysine. Residues D105, D107, D109, Q111, and E116 each coordinate Ca(2+).

This sequence belongs to the calmodulin family. As to expression, not detected in the organs tested.

Its function is as follows. Calmodulin mediates the control of a large number of enzymes, ion channels and other proteins by Ca(2+). Among the enzymes to be stimulated by the calmodulin-Ca(2+) complex are a number of protein kinases and phosphatases. This is Putative calmodulin-3 (PCM3) from Solanum tuberosum (Potato).